A 198-amino-acid chain; its full sequence is Nucleoside triphosphate pyrophosphatase (198 aa).

Aspartate 74 (proton acceptor) is an active-site residue.

The protein belongs to the Maf family. It depends on a divalent metal cation as a cofactor.

It localises to the cytoplasm. The enzyme catalyses a ribonucleoside 5'-triphosphate + H2O = a ribonucleoside 5'-phosphate + diphosphate + H(+). The catalysed reaction is a 2'-deoxyribonucleoside 5'-triphosphate + H2O = a 2'-deoxyribonucleoside 5'-phosphate + diphosphate + H(+). Functionally, nucleoside triphosphate pyrophosphatase. May have a dual role in cell division arrest and in preventing the incorporation of modified nucleotides into cellular nucleic acids. This Sphingopyxis alaskensis (strain DSM 13593 / LMG 18877 / RB2256) (Sphingomonas alaskensis) protein is Nucleoside triphosphate pyrophosphatase.